The primary structure comprises 453 residues: Endoglucanase A (453 aa).

The N-terminal stretch at 1 to 26 (MNCRKYLLSGLAVFGLAATSAVAALS) is a signal peptide. Aspartate 82 (nucleophile) is an active-site residue. The tract at residues 115–126 (TTPTTRKPTTTP) is linker ('hinge') (Pro-Thr box). Residue histidine 417 is part of the active site.

Belongs to the glycosyl hydrolase 9 (cellulase E) family. As to quaternary structure, monomer.

The protein resides in the periplasm. It carries out the reaction Endohydrolysis of (1-&gt;4)-beta-D-glucosidic linkages in cellulose, lichenin and cereal beta-D-glucans.. Functionally, high levels of endoglucanase activity detected on acid-swollen cellulose, ball-milled cellulose, and carboxymethyl cellulose; moderate levels detected on filter paper, phosphoric acid-swollen cellulose, lichenan, and xylan. This is Endoglucanase A (endA) from Fibrobacter succinogenes (Bacteroides succinogenes).